The primary structure comprises 266 residues: NAD kinase 1 (266 aa).

The active-site Proton acceptor is D45. Residues 45-46, 122-123, and R148 each bind NAD(+); these read DG and NE. D150 is an ATP binding site. NAD(+)-binding positions include S158 and 161–166; that span reads TAYNKA.

This sequence belongs to the NAD kinase family. As to quaternary structure, homodimer. Ca(2+) is required as a cofactor. It depends on Mn(2+) as a cofactor.

The protein localises to the cytoplasm. The enzyme catalyses NAD(+) + ATP = ADP + NADP(+) + H(+). With respect to regulation, allosterically inhibited by NADP and activated by quinolinic acid. Strongly inhibited by HgCl(2). Functionally, involved in the regulation of the intracellular balance of NAD and NADP, and is a key enzyme in the biosynthesis of NADP. Catalyzes specifically the phosphorylation on 2'-hydroxyl of the adenosine moiety of NAD to yield NADP. It can use ATP and other nucleoside triphosphates (GTP, UTP) as well as inorganic polyphosphate (poly(P)) as a source of phosphorus. This is NAD kinase 1 (ppnKA) from Bacillus subtilis (strain 168).